A 428-amino-acid polypeptide reads, in one-letter code: Enolase (428 aa).

Gln-163 is a binding site for (2R)-2-phosphoglycerate. Glu-205 (proton donor) is an active-site residue. Mg(2+) contacts are provided by Asp-242, Glu-286, and Asp-313. Residues Lys-338, Arg-367, Ser-368, and Lys-389 each contribute to the (2R)-2-phosphoglycerate site. The active-site Proton acceptor is Lys-338.

This sequence belongs to the enolase family. The cofactor is Mg(2+).

The protein resides in the cytoplasm. The protein localises to the secreted. It is found in the cell surface. It carries out the reaction (2R)-2-phosphoglycerate = phosphoenolpyruvate + H2O. It participates in carbohydrate degradation; glycolysis; pyruvate from D-glyceraldehyde 3-phosphate: step 4/5. Catalyzes the reversible conversion of 2-phosphoglycerate (2-PG) into phosphoenolpyruvate (PEP). It is essential for the degradation of carbohydrates via glycolysis. This Bordetella bronchiseptica (strain ATCC BAA-588 / NCTC 13252 / RB50) (Alcaligenes bronchisepticus) protein is Enolase.